A 304-amino-acid polypeptide reads, in one-letter code: Glutaminase (304 aa).

S63, N113, E157, N164, Y188, Y240, and V258 together coordinate substrate.

Belongs to the glutaminase family. As to quaternary structure, homotetramer.

It catalyses the reaction L-glutamine + H2O = L-glutamate + NH4(+). This Paraburkholderia phytofirmans (strain DSM 17436 / LMG 22146 / PsJN) (Burkholderia phytofirmans) protein is Glutaminase.